The following is a 387-amino-acid chain: 26S proteasome regulatory subunit 6B homolog (387 aa).

175–182 is an ATP binding site; it reads GPPGTGKT.

It belongs to the AAA ATPase family. As to quaternary structure, the 26S proteasome consists of a 20S proteasome core and two 19S regulatory subunits. The 20S proteasome core is composed of 28 subunits that are arranged in four stacked rings, resulting in a barrel-shaped structure. The two end rings are each formed by seven alpha subunits, and the two central rings are each formed by seven beta subunits. The catalytic chamber with the active sites is on the inside of the barrel.

It is found in the cytoplasm. The protein resides in the nucleus. Its function is as follows. Acts as a regulatory subunit of the 26S proteasome which degrades poly-ubiquitinated proteins in the cytoplasm and in the nucleus. It is essential for the regulated turnover of proteins and for the removal of misfolded proteins. The proteasome is a multicatalytic proteinase complex that is characterized by its ability to cleave peptides with Arg, Phe, Tyr, Leu, and Glu adjacent to the leaving group at neutral or slightly basic pH. The sequence is that of 26S proteasome regulatory subunit 6B homolog from Encephalitozoon cuniculi (strain GB-M1) (Microsporidian parasite).